A 138-amino-acid chain; its full sequence is Cysteine desulfuration protein SufE (138 aa).

Cysteine 51 acts as the Cysteine persulfide intermediate in catalysis.

It belongs to the SufE family. As to quaternary structure, homodimer. Interacts with SufS.

It localises to the cytoplasm. The protein operates within cofactor biosynthesis; iron-sulfur cluster biosynthesis. Functionally, participates in cysteine desulfuration mediated by SufS. Cysteine desulfuration mobilizes sulfur from L-cysteine to yield L-alanine and constitutes an essential step in sulfur metabolism for biosynthesis of a variety of sulfur-containing biomolecules. Functions as a sulfur acceptor for SufS, by mediating the direct transfer of the sulfur atom from the S-sulfanylcysteine of SufS, an intermediate product of cysteine desulfuration process. In Shigella sonnei (strain Ss046), this protein is Cysteine desulfuration protein SufE.